The following is a 109-amino-acid chain: Putative glutaredoxin-C11 (109 aa).

The Glutaredoxin domain maps to 2 to 108 (AEMVARLASE…PLLKSAGALW (107 aa)). C22 and C25 form a disulfide bridge. Residues 106–109 (ALWL) carry the Responsive for interaction with TGA factors motif.

It belongs to the glutaredoxin family. CC-type subfamily.

It localises to the cytoplasm. It is found in the nucleus. Has a glutathione-disulfide oxidoreductase activity in the presence of NADPH and glutathione reductase. Reduces low molecular weight disulfides and proteins. This is Putative glutaredoxin-C11 (GRXC11) from Oryza sativa subsp. japonica (Rice).